The sequence spans 684 residues: Rabphilin-3A (684 aa).

The disordered stretch occupies residues 1–21; sequence MTDTVVNRWMYPGDGPLQSND. Residues 40-157 form the RabBD domain; it reads QRKQEELTDE…KRSGAWFFKG (118 aa). The FYVE-type zinc-finger motif lies at 88 to 145; it reads GDGVNRCILCGEQLGMLGSACVVCEDCKKNVCTKCGVETSNNRPHPVWLCKICLEQRE. Zn(2+) contacts are provided by Cys94, Cys97, Cys111, Cys114, Cys119, Cys122, Cys137, and Cys140. The disordered stretch occupies residues 162-377; the sequence is VLPQPMPIKK…EEEEANSYDS (216 aa). A compositionally biased stretch (basic and acidic residues) spans 199–208; the sequence is ARGDMEDRRA. The residue at position 223 (Arg223) is an Omega-N-methylarginine. Residues 243 to 252 are compositionally biased toward basic and acidic residues; the sequence is RDSEGWDHGH. Position 274 is a phosphoserine (Ser274). Over residues 283–299 the composition is skewed to pro residues; it reads ASMPSPAPPQPVQPGPP. Low complexity predominate over residues 301–310; sequence GSRAAPGPGR. One can recognise a C2 1 domain in the interval 382–504; that stretch reads TLGALEFSLL…KANQRKNFNI (123 aa). 14 residues coordinate Ca(2+): Met412, Asp413, Asp419, Asp474, Glu475, Asp476, Glu482, Glu529, Asp571, Asp577, Asp631, Tyr632, Asp633, and Asp639. Positions 540–673 constitute a C2 2 domain; that stretch reads ERGKILVSLM…NKDKKIERWH (134 aa). Phosphoserine is present on residues Ser682 and Ser683.

In terms of assembly, interacts with RAB3B, RAB3C, RAB3D, RAB8A, RAB27A and RAB27B. Interacts with RAB3A; this interaction recruits RPH3A to synaptic vesicules. Interacts (via C2B domain) with SNAP25. Interacts with deubiquitinating enzyme CAND1; this interaction results in the deubiquitination of RPH3A. Interacts with GRIN2A and DLG4; this ternary complex regulates NMDA receptor composition at postsynaptic membranes. Interacts with SNCA. Ca(2+) is required as a cofactor. In terms of processing, ubiquitinated. Deubiquitinated by CAND1 to prevent its degradation. As to expression, specifically expressed in brain.

It localises to the cytoplasmic vesicle. It is found in the secretory vesicle. Its subcellular location is the synaptic vesicle membrane. The protein resides in the cell projection. The protein localises to the dendritic spine. It localises to the postsynaptic cell membrane. It is found in the membrane. In terms of biological role, plays an essential role in docking and fusion steps of regulated exocytosis. At the presynaptic level, RPH3A is recruited by RAB3A to the synaptic vesicle membrane in a GTP-dependent manner where it modulates synaptic vesicle trafficking and calcium-triggered neurotransmitter release. In the post-synaptic compartment, forms a ternary complex with GRIN2A and DLG4 and regulates NMDA receptor stability. Also plays a role in the exocytosis of arginine vasopressin hormone. The polypeptide is Rabphilin-3A (Rph3a) (Rattus norvegicus (Rat)).